We begin with the raw amino-acid sequence, 434 residues long: tRNA dimethylallyltransferase (434 aa).

10–17 is a binding site for ATP; the sequence is GTTGAGKS. 12–17 is a binding site for substrate; that stretch reads TGAGKS. Interaction with substrate tRNA stretches follow at residues 35–38 and 166–170; these read DSMQ and RKIRR. Residues 211 to 233 are interaction with isopentenylpyrophosphate transferase; sequence SLVLMPRLDKRVDKMLSHGLVDE. Interaction with substrate tRNA stretches follow at residues 256–258, 281–299, and 291–298; these read QCI, RMKVSTRQYAKSQKKWIQS, and KSQKKWIQ. Residues 380 to 416 form a Matrin-type zinc finger; that stretch reads FVCEECLDKRGDPFTVIGEDAFNVHIKSRKHKTTVRR.

The protein belongs to the IPP transferase family.

The protein resides in the mitochondrion. It is found in the cytoplasm. Its subcellular location is the nucleus. The catalysed reaction is adenosine(37) in tRNA + dimethylallyl diphosphate = N(6)-dimethylallyladenosine(37) in tRNA + diphosphate. Its function is as follows. Catalyzes the transfer of a dimethylallyl group onto the adenine at position 37 of both cytosolic and mitochondrial tRNAs, leading to the formation of N6-(dimethylallyl)adenosine (i(6)A). The protein is tRNA dimethylallyltransferase (tit1) of Schizosaccharomyces pombe (strain 972 / ATCC 24843) (Fission yeast).